Reading from the N-terminus, the 298-residue chain is GTP cyclohydrolase FolE2 (298 aa).

Belongs to the GTP cyclohydrolase IV family.

The enzyme catalyses GTP + H2O = 7,8-dihydroneopterin 3'-triphosphate + formate + H(+). It functions in the pathway cofactor biosynthesis; 7,8-dihydroneopterin triphosphate biosynthesis; 7,8-dihydroneopterin triphosphate from GTP: step 1/1. In terms of biological role, converts GTP to 7,8-dihydroneopterin triphosphate. The chain is GTP cyclohydrolase FolE2 from Neisseria meningitidis serogroup C (strain 053442).